A 338-amino-acid chain; its full sequence is Large ribosomal subunit protein uL10 (338 aa).

A disordered region spans residues 295 to 338; the sequence is EVPTIQPTTPPEKKEEEEKKEEEEEEAETVSEEELAEGLGALFG. Over residues 312 to 330 the composition is skewed to acidic residues; sequence EKKEEEEEEAETVSEEELA.

It belongs to the universal ribosomal protein uL10 family. As to quaternary structure, part of the 50S ribosomal subunit. Forms part of the ribosomal stalk which helps the ribosome interact with GTP-bound translation factors. Forms a heptameric L10(L12)2(L12)2(L12)2 complex, where L10 forms an elongated spine to which the L12 dimers bind in a sequential fashion.

Its function is as follows. Forms part of the ribosomal stalk, playing a central role in the interaction of the ribosome with GTP-bound translation factors. The polypeptide is Large ribosomal subunit protein uL10 (Staphylothermus marinus (strain ATCC 43588 / DSM 3639 / JCM 9404 / F1)).